We begin with the raw amino-acid sequence, 730 residues long: ATP-binding cassette sub-family D member 1 (730 aa).

Helical transmembrane passes span 24 to 44, 137 to 157, 169 to 189, and 276 to 296; these read AFSYALVTSAILALTIKVTIP, FCLISRTFLSIYVAALEGALV, ALVLLKWFGIAIPATFVNSMI, and ANIITGPALSIGVIALTAHIL. The 238-residue stretch at 136–373 folds into the ABC transmembrane type-1 domain; sequence TFCLISRTFL…WFIMLEQFFM (238 aa). Residues 505–727 form the ABC transporter domain; it reads ISLRAVPVVT…MNSDEEQKGQ (223 aa). 538 to 545 is an ATP binding site; that stretch reads GPNGCGKS.

It belongs to the ABC transporter superfamily. ABCD family. Peroxisomal fatty acyl CoA transporter (TC 3.A.1.203) subfamily.

Its subcellular location is the peroxisome membrane. The enzyme catalyses an acyl-CoA(out) + ATP + H2O = an acyl-CoA(in) + ADP + phosphate + H(+). Functionally, plays a role in the transport of free very-long-chain fatty acids (VLCFAs) as well as their CoA-esters across the peroxisomal membrane by acting as an ATP-specific binding subunit releasing ADP after ATP hydrolysis. Thus, plays a role in regulation of VLCFAs and energy metabolism namely, in the degradation and biosynthesis of fatty acids by beta-oxidation, mitochondrial function and microsomal fatty acid elongation. The chain is ATP-binding cassette sub-family D member 1 from Drosophila melanogaster (Fruit fly).